The chain runs to 274 residues: Non-homologous end joining protein Ku (274 aa).

One can recognise a Ku domain in the interval 11 to 195; it reads ITFGLVNVPV…KYKITPKELS (185 aa).

It belongs to the prokaryotic Ku family. In terms of assembly, homodimer. Interacts with LigD.

Functionally, with LigD forms a non-homologous end joining (NHEJ) DNA repair enzyme, which repairs dsDNA breaks with reduced fidelity. Binds linear dsDNA with 5'- and 3'- overhangs but not closed circular dsDNA nor ssDNA. Recruits and stimulates the ligase activity of LigD. This is Non-homologous end joining protein Ku from Coxiella burnetii (strain RSA 331 / Henzerling II).